The following is a 230-amino-acid chain: Probable tetraspanin tspD (230 aa).

Topologically, residues 1–20 (MVEYLPSTPRYLKVPLIILN) are cytoplasmic. Residues 21–41 (VILWLLGLVLVIIGGICVGFF) traverse the membrane as a helical segment. Residues 42–65 (SRFKELQEVGGVSESIKSISVSLP) are Extracellular-facing. Residues 66-86 (AGVLSIGIFFMVLTVAGCIVA) traverse the membrane as a helical segment. Over 87–90 (YKEK) the chain is Cytoplasmic. Residues 91–111 (MVGLVFYTILMLVLLVVLIGI) form a helical membrane-spanning segment. Residues 112 to 200 (GGEALTYHNA…VNSKLYLVGS (89 aa)) lie on the Extracellular side of the membrane. N-linked (GlcNAc...) asparagine glycans are attached at residues asparagine 133, asparagine 138, asparagine 163, and asparagine 179. Residues 201-221 (AGVAIGVIELVSLMFALFLIV) traverse the membrane as a helical segment. The Cytoplasmic portion of the chain corresponds to 222–230 (RLYKSNSYR).

This sequence belongs to the tetraspanin (TM4SF) family.

The protein localises to the membrane. The chain is Probable tetraspanin tspD (tspD) from Dictyostelium discoideum (Social amoeba).